The following is a 241-amino-acid chain: Megakaryocyte and platelet inhibitory receptor G6b (241 aa).

The signal sequence occupies residues 1-17; sequence MAVFLQLLPLLLSRAQG. Over 18-142 the chain is Extracellular; sequence NPGASLDGRP…GPTHGSVYPQ (125 aa). N-linked (GlcNAc...) asparagine glycosylation is present at Asn32. Residues 143–163 traverse the membrane as a helical segment; it reads LLIPLLGAGLVLGLGALGLVW. The Cytoplasmic portion of the chain corresponds to 164–241; it reads WLHRRLPPQP…DASTIYAVVV (78 aa). Short sequence motifs (ITIM motif) lie at residues 209–214 and 235–240; these read LLYADL and TIYAVV. Phosphotyrosine is present on Tyr211.

Interacts (via ITIM motif) with PTPN6 and PTPN11. Binds to heparin. All isoforms are N-glycosylated. Post-translationally, isoform E is O-glycosylated. In terms of processing, phosphorylated. As to expression, expressed in platelets. Expressed in a restricted set of hematopoietic cell lines including the erythroleukemia cell line K-562 and the T-cell leukemia cell lines MOLT-4 and Jurkat. Not detected in the monocyte-like cell line U-937, the B-cell-like cell line Raji, the fibroblast cell lines TK and HeLa, or the natural killer cell lines NKL, NK 62 and YT.

It is found in the endoplasmic reticulum. The protein localises to the golgi apparatus. Its subcellular location is the cell membrane. Its function is as follows. Inhibitory receptor that acts as a critical regulator of hematopoietic lineage differentiation, megakaryocyte function and platelet production. Inhibits platelet aggregation and activation by agonists such as ADP and collagen-related peptide. This regulation of megakaryocate function as well as platelet production ann activation is done through the inhibition (via the 2 ITIM motifs) of the receptors CLEC1B and GP6:FcRgamma signaling. Appears to operate in a calcium-independent manner. Functionally, isoform B, displayed in this entry, is the only isoform to contain both a transmembrane region and 2 immunoreceptor tyrosine-based inhibitor motifs (ITIMs) and, thus, the only one which probably has a role of inhibitory receptor. Isoform A may be the activating counterpart of isoform B. This is Megakaryocyte and platelet inhibitory receptor G6b from Homo sapiens (Human).